The chain runs to 1196 residues: RNA-dependent RNA polymerase 6 (1196 aa).

This sequence belongs to the RdRP family. In terms of assembly, interacts with SGS3. As to expression, widely expressed.

It is found in the cytoplasmic granule. It localises to the nucleus. It carries out the reaction RNA(n) + a ribonucleoside 5'-triphosphate = RNA(n+1) + diphosphate. Its function is as follows. RNA-dependent RNA polymerase involved in post-transcriptional gene silencing (PTGS). Possesses ssRNA and ssDNA-dependent polymerase activity, but does not have priming activity. Possesses in vitro 3' nucleotidyltransferase activity in the presence of UTP as single nucleotide. Required for the production of 21 nucleotide trans-acting small interfering RNAs (ta-siRNAs) derived from TAS1, TAS2 and TAS3 endogenous transcripts. Acts in the RDR6/SGS3/DCL4/AGO7 ta-siRNA pathway involved in leaf developmental timing. Required for the production of natural siRNAs (nat-siRNAs) derived from cis-natural antisense transcripts. Required for the production of 24 nucleotide nat-siRNAs derived from the stress-related P5CDH-SRO5 antisense gene pair. Required for PTGS induced by transgene direct repeats. Plays an essential role in transitive silencing of transgenes by processing secondary siRNAs. This pathway, which requires DCL2 and DCL4, amplifies silencing by using the target RNA as substrate to generate secondary siRNAs, providing an efficient mechanism for long-distance silencing. Involved in the biogenesis of secondary siRNAs which require 22 nucleotide miRNAs associated to AGO1. Participates synergistically with AS1 and AS2 to proper plant development by repressing the miR165 and miR166 microRNAs (independently of AGO10) that may lead to mRNA degradation of genes in the class III HD-ZIP family. Required for the production of some small RNAs derived from the crucifer-infecting tobamovirus (TMV-cg). Required for sense virus-induced post-transcriptional gene silencing (S-PTGS). The sequence is that of RNA-dependent RNA polymerase 6 (RDR6) from Arabidopsis thaliana (Mouse-ear cress).